A 130-amino-acid chain; its full sequence is Protein YgiW (130 aa).

The N-terminal stretch at methionine 1–alanine 20 is a signal peptide. Residues glycine 25–glycine 44 form a disordered region. Residues proline 29–glycine 44 show a composition bias toward polar residues.

It to H.influenzae HI_1709.

It localises to the periplasm. This chain is Protein YgiW (ygiW), found in Escherichia coli O157:H7.